A 287-amino-acid chain; its full sequence is Syntaxin-11 (287 aa).

Residues 41-71 are a coiled coil; it reads LESLYRDIRDIQDENQLLVADVKRLGKQNAR. The t-SNARE coiled-coil homology domain maps to 204–266; the sequence is LNEIESRHRE…GQAKAQVRKA (63 aa).

This sequence belongs to the syntaxin family. As to quaternary structure, interacts with the SNARE proteins SNAP-23 and VAMP.

The protein resides in the membrane. It localises to the golgi apparatus. It is found in the trans-Golgi network membrane. SNARE that acts to regulate protein transport between late endosomes and the trans-Golgi network. The protein is Syntaxin-11 (STX11) of Homo sapiens (Human).